The following is a 583-amino-acid chain: MGLFTVTKKATTPFEGQKPGTSGLRKKVTVFQQPHYLQNFVQSTFNALPADQVKGATIVVSGDGRYFSKDAVQIITKMAAANGVRRVWVGQNSLMSTPAVSAVIRERIGADGSKATGAFILTASHNPGGPTEDFGIKYNMGNGGPAPESVTDKIFSNTTTISEYLISEDLPDVDISVVGVTSFSGPEGPFDVDVFDSSVNYIKLMKTIFDFEAIKKLLTSPKFTFCYDALHGVAGAYAKHIFVEELGADESSLLNCVPKEDFGGGHPDPNLTYAKELVERMGLGKSSSNVEPPEFGAAADGDADRNMILGKRFFVTPSDSVAIIAANAVQSIPYFASGLKGVARSMPTSAALDVVAKNLNLKFFEVPTGWKFFGNLMDAGMCSICGEESFGTGSDHIREKDGIWAVLAWLSIIAFKNKDNLGGDKLVTVEDIVRQHWATYGRHYYTRYDYENVDAGAAKELMANLVSMQSSLSDVNKLIKEIRSDVSEVVAADEFEYKDPVDGSVSKHQGIRYLFGDGSRLVFRLSGTGSVGATIRVYIEQYEKDSSKTGRDSQEALAPLVDVALKLSKMQEYTGRSAPTVIT.

Alpha-D-glucose 1,6-bisphosphate contacts are provided by Arg-25 and Ser-124. Residue Ser-124 is the Phosphoserine intermediate of the active site. 4 residues coordinate Mg(2+): Ser-124, Asp-300, Asp-302, and Asp-304. Ser-124 is modified (phosphoserine). 6 residues coordinate alpha-D-glucose 1,6-bisphosphate: Asp-304, Arg-305, Thr-368, Glu-387, Ser-389, and Lys-400.

Belongs to the phosphohexose mutase family. As to quaternary structure, monomer. Mg(2+) is required as a cofactor.

The protein resides in the cytoplasm. The catalysed reaction is alpha-D-glucose 1-phosphate = alpha-D-glucose 6-phosphate. It carries out the reaction O-phospho-L-seryl-[protein] + alpha-D-glucose 1-phosphate = alpha-D-glucose 1,6-bisphosphate + L-seryl-[protein]. The enzyme catalyses alpha-D-glucose 1,6-bisphosphate + L-seryl-[protein] = O-phospho-L-seryl-[protein] + alpha-D-glucose 6-phosphate. In terms of biological role, catalyzes the reversible isomerization of alpha-D-glucose 1-phosphate to alpha-D-glucose 6-phosphate. The mechanism proceeds via the intermediate compound alpha-D-glucose 1,6-bisphosphate. This enzyme participates in both the breakdown and synthesis of glucose. The polypeptide is Phosphoglucomutase, cytoplasmic 2 (Zea mays (Maize)).